A 203-amino-acid polypeptide reads, in one-letter code: Recombination protein RecR (203 aa).

The C4-type zinc-finger motif lies at 57–72; the sequence is CARCNTFSETELCVLC. One can recognise a Toprim domain in the interval 80–175; the sequence is DVLCVVEMPA…SVSRIARGLP (96 aa).

It belongs to the RecR family.

In terms of biological role, may play a role in DNA repair. It seems to be involved in an RecBC-independent recombinational process of DNA repair. It may act with RecF and RecO. This chain is Recombination protein RecR, found in Laribacter hongkongensis (strain HLHK9).